The following is an 883-amino-acid chain: Copper-transporting ATPase PAA2, chloroplastic (883 aa).

The transit peptide at 1–65 directs the protein to the chloroplast; it reads MASNLLRFPL…TQSFESTESS (65 aa). Residues 76–146 form the HMA domain; sequence TPILLDVSGM…RLTESGFEAK (71 aa). Positions 87 and 90 each coordinate Cu cation. Transmembrane regions (helical) follow at residues 179–199, 209–229, 250–270, 274–294, 445–465, and 499–519; these read VAFA…HILH, GIWD…GALL, MNSL…ISLV, LEWD…VLLG, AIAG…FAFW, and VLVV…ILIG. Asp-548 serves as the catalytic 4-aspartylphosphate intermediate. 761–768 serves as a coordination point for ATP; that stretch reads GDGINDAP. Mg(2+) contacts are provided by Asp-762 and Asp-766. Helical transmembrane passes span 822–842 and 846–866; these read LAWA…VLLP and FAMT…FVVS.

Belongs to the cation transport ATPase (P-type) (TC 3.A.3) family. Type IB subfamily. Expressed in the shoots only and not in the roots.

It is found in the plastid. The protein resides in the chloroplast thylakoid membrane. The catalysed reaction is Cu(2+)(in) + ATP + H2O = Cu(2+)(out) + ADP + phosphate + H(+). Its function is as follows. Mediates copper transfer across the chloroplast thylakoid membrane. Required for copper delivery into the thylakoids lumen, which is essential for the function of copper proteins. The polypeptide is Copper-transporting ATPase PAA2, chloroplastic (PAA2) (Arabidopsis thaliana (Mouse-ear cress)).